The primary structure comprises 668 residues: Trehalase (668 aa).

Positions 1–23 (MVLQQTEPTDGADRKASDGPLTV) are disordered.

The protein belongs to the glycosyl hydrolase 15 family. In terms of assembly, homomultimer of 20 or more subunits. The cofactor is Mg(2+). Requires phosphate as cofactor.

The enzyme catalyses alpha,alpha-trehalose + H2O = alpha-D-glucose + beta-D-glucose. It functions in the pathway glycan degradation; trehalose degradation; D-glucose from alpha,alpha-trehalose: step 1/1. Inhibited by pyrophosphate and polyphosphates. Also competitively inhibited by validoxylamine and castanospermine, but not by trehazolin. In terms of biological role, catalyzes the hydrolysis of alpha,alpha-trehalose into two molecules of D-glucose. Does not hydrolyze maltose, isomaltose, sucrose, cellobiose, p-nitrophenyl-alpha-D-glucopyranoside, and methyl-alpha-D-glucopyranoside. Is also inactive on alpha,beta-trehalose, beta,beta-trehalose, alpha,alpha-trehalose-6,6'-dibehenate, trehalulose, nigerose, and trehalose dimycolate. This Mycolicibacterium smegmatis (strain ATCC 700084 / mc(2)155) (Mycobacterium smegmatis) protein is Trehalase.